The primary structure comprises 505 residues: ATP nucleosidase Cap17 (505 aa).

A cyclic oligonucleotide sensing-domain region spans residues 1–229; it reads MTNTNNEYVL…RLSEIAVELL (229 aa). A purine nucleoside phosphorylase domain region spans residues 239–505; sequence LHTPSVLILT…DYLQHGWIRA (267 aa).

It belongs to the Cap17 family.

It carries out the reaction ATP + H2O = D-ribose 5-triphosphate + adenine. It catalyses the reaction dATP + H2O = 2-deoxyribose 5-triphosphate + adenine. Functionally, effector protein with (d)ATP degrading activity of a CBASS antivirus system. CBASS (cyclic oligonucleotide-based antiphage signaling system) provides immunity against bacteriophage. A CD-NTase protein synthesizes cyclic nucleotides in response to infection; these serve as specific second messenger signals. The signals activate a diverse range of effectors, leading to bacterial cell death and thus abortive phage infection. A type III CBASS system. Expression of this CBASS system (Cap18-Cap6-Cap7-CdnC-CapW-Cap17) in a susceptible E.coli (strain MG1655) confers resistance to bacteriophage P1, leading to cell lysis. By 50 minutes post-infection, ATP levels are markedly reduced while dATP has been eliminated. The C-terminal purine nucleoside phosphorylase (PNP) domain cleaves the N-glycosidic bond of (d)ATP to release adenine and a sugar triphosphate; has no activity on other (d)NTPs, nor on DNA or RNA. In vivo during phage infection has pleoitropic effects on nucleotide accumulation. This protein may be activated by the cognate CD-NTase (CdnC). In Escherichia coli (strain KTE188), this protein is ATP nucleosidase Cap17.